The primary structure comprises 212 residues: 3-demethoxyubiquinol 3-hydroxylase (212 aa).

Residues Glu61, Glu91, His94, Glu143, Glu175, and His178 each contribute to the Fe cation site.

Belongs to the COQ7 family. Requires Fe cation as cofactor.

The protein resides in the cell membrane. The enzyme catalyses a 5-methoxy-2-methyl-3-(all-trans-polyprenyl)benzene-1,4-diol + AH2 + O2 = a 3-demethylubiquinol + A + H2O. It functions in the pathway cofactor biosynthesis; ubiquinone biosynthesis. Its function is as follows. Catalyzes the hydroxylation of 2-nonaprenyl-3-methyl-6-methoxy-1,4-benzoquinol during ubiquinone biosynthesis. This is 3-demethoxyubiquinol 3-hydroxylase from Methylibium petroleiphilum (strain ATCC BAA-1232 / LMG 22953 / PM1).